A 269-amino-acid polypeptide reads, in one-letter code: 2' cyclic ADP-D-ribose synthase AbTIR (269 aa).

Positions 31 to 99 (LKTKLSEISR…KQQKDEIEHQ (69 aa)) form a coiled coil. Residues 133–266 (PEYDLFISHA…EIAHQLADVI (134 aa)) enclose the TIR domain. The NAD(+) site is built by S143, K172, and K202. Residue E208 is part of the active site. K245 contributes to the NAD(+) binding site.

In terms of assembly, homodimer. In the presence of NAD(+) analog 8-amino-isoquinoline adenine dinucleotide (3AD) forms filaments with 3AD between monomers; conformational changes occur upon 3AD binding.

The catalysed reaction is NAD(+) = 2'cADPR + nicotinamide + H(+). It catalyses the reaction NAD(+) + H2O = ADP-D-ribose + nicotinamide + H(+). The enzyme catalyses NADP(+) + H2O = ADP-D-ribose 2'-phosphate + nicotinamide + H(+). In terms of biological role, NAD(+) hydrolase (NADase) that catalyzes cleavage of NAD(+) into ADP-D-ribose (ADPR) and nicotinamide. In addition to ADPR, also generates a cyclization variant of cyclic ADPR (cADPR), termed 2'cADPR (v-cADPR). Cleaves NADP(+), but does not cyclize the product. The polypeptide is 2' cyclic ADP-D-ribose synthase AbTIR (Acinetobacter baumannii (strain 1295743)).